We begin with the raw amino-acid sequence, 248 residues long: ATP synthase subunit a (248 aa).

A run of 6 helical transmembrane segments spans residues 27 to 47, 83 to 103, 113 to 133, 142 to 162, 192 to 212, and 215 to 235; these read FTNSSAYMFGTVALIAILMLV, FFPLVFSLFMFIAVSNLIGIV, LIVTVALALLVFFTVLIYGFS, LFVPSGVPIYILPLVVFIEVI, FVAMLGALGVVGWFGAVLPLG, and IALTALELLVAFLQAYVFAIL.

Belongs to the ATPase A chain family. In terms of assembly, F-type ATPases have 2 components, CF(1) - the catalytic core - and CF(0) - the membrane proton channel. CF(1) has five subunits: alpha(3), beta(3), gamma(1), delta(1), epsilon(1). CF(0) has four main subunits: a, b, b' and c.

The protein localises to the cell inner membrane. Its function is as follows. Key component of the proton channel; it plays a direct role in the translocation of protons across the membrane. This chain is ATP synthase subunit a, found in Rhodopseudomonas palustris (strain ATCC BAA-98 / CGA009).